A 341-amino-acid polypeptide reads, in one-letter code: Heat-shock protein cognate (HSC) co-chaperone sgt12 (341 aa).

Residues 86-123 (PSKEPASAGAQAQSTEAQQPKAGAPTPESDKLKSEGNA) are disordered. 3 TPR repeats span residues 114–147 (SDKLKSEGNAAMARKEYSKAIDLYTQALSIAPAN), 148–181 (PIYLSNRAAAYSASGQHEKAAEDAELATVVDPKY), and 182–215 (SKAWSRLGLARFDMADYKGAKEAYEKGIEAEGNG). Residues 232 to 280 (EEANRGAEPPADDVDDAAGASRGAGGMPDLSSLASMLGGRGGGGGGMPD) are disordered. Over residues 269-278 (GGRGGGGGGM) the composition is skewed to gly residues.

Belongs to the SGT family. In terms of assembly, forms homodimers. Component of the get4/get5/sgt2 sorting complex. Dimers of sgt2 bind directly a single get5. Binds HSC family members ssa1, sse1, hsp104 and hsc82 via its TPR domain.

It is found in the cytoplasm. In terms of biological role, heat-shock protein cognate (HSC) co-chaperone that preferentially binds endoplasmic reticulum-destined tail-anchored (TA) proteins and directs them to the GET (guided entry of TA proteins) pathway via get4 and get5. Get4 and get5 form an obligate complex that catalyzes the transfer of tail-anchored proteins destined to the endoplasmic reticulum from sgt2 to the cytosolic targeting factor which then targets the TA protein to the ER membrane via get1/get2. This chain is Heat-shock protein cognate (HSC) co-chaperone sgt12, found in Aspergillus fumigatus (strain ATCC MYA-4609 / CBS 101355 / FGSC A1100 / Af293) (Neosartorya fumigata).